We begin with the raw amino-acid sequence, 546 residues long: Major facilitator superfamily transporter MPN_077 (546 aa).

Transmembrane regions (helical) follow at residues 2–22, 62–82, 88–108, 179–199, 220–240, 248–268, 305–325, 344–364, 377–397, 401–421, 442–462, and 485–505; these read WGLV…IDFI, WTIT…VVKF, VMIM…GSPL, AFFI…IAYA, FWGF…PGVG, VWVV…FAWF, LLAI…QTWF, PILL…LSPF, FIFT…ATLG, VVGF…GWSL, IIFG…DIIT, and IAAI…IIYL.

It belongs to the major facilitator superfamily.

It is found in the cell membrane. This is Major facilitator superfamily transporter MPN_077 from Mycoplasma pneumoniae (strain ATCC 29342 / M129 / Subtype 1) (Mycoplasmoides pneumoniae).